A 497-amino-acid polypeptide reads, in one-letter code: Glycerol kinase (497 aa).

Thr13 provides a ligand contact to ADP. ATP contacts are provided by Thr13, Thr14, and Ser15. Thr13 is a binding site for sn-glycerol 3-phosphate. Arg17 contacts ADP. Residues Arg83, Glu84, and Tyr135 each contribute to the sn-glycerol 3-phosphate site. Positions 83, 84, and 135 each coordinate glycerol. His231 carries the post-translational modification Phosphohistidine; by HPr. Residue Asp245 coordinates sn-glycerol 3-phosphate. Positions 245 and 246 each coordinate glycerol. Residues Thr267 and Gly310 each contribute to the ADP site. ATP contacts are provided by Thr267, Gly310, Gln314, and Gly411. Residues Gly411 and Asn415 each contribute to the ADP site.

The protein belongs to the FGGY kinase family. Homotetramer and homodimer (in equilibrium). In terms of processing, the phosphoenolpyruvate-dependent sugar phosphotransferase system (PTS), including enzyme I, and histidine-containing protein (HPr) are required for the phosphorylation, which leads to the activation of the enzyme.

It carries out the reaction glycerol + ATP = sn-glycerol 3-phosphate + ADP + H(+). The protein operates within polyol metabolism; glycerol degradation via glycerol kinase pathway; sn-glycerol 3-phosphate from glycerol: step 1/1. Activated by phosphorylation and inhibited by fructose 1,6-bisphosphate (FBP). Its function is as follows. Key enzyme in the regulation of glycerol uptake and metabolism. Catalyzes the phosphorylation of glycerol to yield sn-glycerol 3-phosphate. The protein is Glycerol kinase of Listeria innocua serovar 6a (strain ATCC BAA-680 / CLIP 11262).